We begin with the raw amino-acid sequence, 256 residues long: Small ribosomal subunit protein eS1A (256 aa).

The residue at position 2 (Ala-2) is an N-acetylalanine; partial.

This sequence belongs to the eukaryotic ribosomal protein eS1 family. In terms of assembly, component of the small ribosomal subunit. Mature ribosomes consist of a small (40S) and a large (60S) subunit. The 40S subunit contains about 33 different proteins and 1 molecule of RNA (18S). The 60S subunit contains about 49 different proteins and 3 molecules of RNA (25S, 5.8S and 5S).

The protein localises to the cytoplasm. The polypeptide is Small ribosomal subunit protein eS1A (Debaryomyces hansenii (strain ATCC 36239 / CBS 767 / BCRC 21394 / JCM 1990 / NBRC 0083 / IGC 2968) (Yeast)).